A 57-amino-acid polypeptide reads, in one-letter code: Weak toxin CM-1b (57 aa).

4 disulfides stabilise this stretch: Cys-3/Cys-19, Cys-12/Cys-37, Cys-40/Cys-49, and Cys-50/Cys-55.

It belongs to the three-finger toxin family. Short-chain subfamily. Orphan group XX sub-subfamily. In terms of tissue distribution, expressed by the venom gland.

The protein resides in the secreted. This chain is Weak toxin CM-1b, found in Hemachatus haemachatus (Rinkhals).